Consider the following 434-residue polypeptide: Serine/threonine transporter SstT (434 aa).

The next 9 helical transmembrane spans lie at 14–34, 41–61, 72–92, 135–155, 172–192, 210–230, 282–302, 316–336, and 351–371; these read IVIG…WSFI, FVGA…MSAI, FGTV…AAVA, ALVE…GSGL, TVSA…VGLL, LLML…PFMV, ISIP…VSIM, IFLA…VSGI, and FGIS…IGVV. The tract at residues 414–434 is disordered; that stretch reads KGTAEVVTPEKANEAEESEQV.

This sequence belongs to the dicarboxylate/amino acid:cation symporter (DAACS) (TC 2.A.23) family.

It localises to the cell membrane. It catalyses the reaction L-serine(in) + Na(+)(in) = L-serine(out) + Na(+)(out). It carries out the reaction L-threonine(in) + Na(+)(in) = L-threonine(out) + Na(+)(out). Functionally, involved in the import of serine and threonine into the cell, with the concomitant import of sodium (symport system). The sequence is that of Serine/threonine transporter SstT from Lacticaseibacillus paracasei (strain ATCC 334 / BCRC 17002 / CCUG 31169 / CIP 107868 / KCTC 3260 / NRRL B-441) (Lactobacillus paracasei).